A 134-amino-acid chain; its full sequence is Large ribosomal subunit protein uL14 (134 aa).

It belongs to the universal ribosomal protein uL14 family. In terms of assembly, in the 70S ribosome, L14 and L19 interact and together make contacts with the 16S rRNA in bridges B5 and B8. Part of the 50S ribosomal subunit. Forms a cluster with proteins L3 and L19.

Its function is as follows. Forms part of two intersubunit bridges in the 70S ribosome. Binds to 23S rRNA. The sequence is that of Large ribosomal subunit protein uL14 from Deinococcus radiodurans (strain ATCC 13939 / DSM 20539 / JCM 16871 / CCUG 27074 / LMG 4051 / NBRC 15346 / NCIMB 9279 / VKM B-1422 / R1).